The chain runs to 382 residues: UDP-N-acetylglucosamine--N-acetylmuramyl-(pentapeptide) pyrophosphoryl-undecaprenol N-acetylglucosamine transferase (382 aa).

UDP-N-acetyl-alpha-D-glucosamine-binding positions include 17 to 19 (TAG), Asn-137, Arg-179, Ser-213, and Gln-308.

It belongs to the glycosyltransferase 28 family. MurG subfamily.

The protein resides in the cell membrane. It carries out the reaction di-trans,octa-cis-undecaprenyl diphospho-N-acetyl-alpha-D-muramoyl-L-alanyl-D-glutamyl-meso-2,6-diaminopimeloyl-D-alanyl-D-alanine + UDP-N-acetyl-alpha-D-glucosamine = di-trans,octa-cis-undecaprenyl diphospho-[N-acetyl-alpha-D-glucosaminyl-(1-&gt;4)]-N-acetyl-alpha-D-muramoyl-L-alanyl-D-glutamyl-meso-2,6-diaminopimeloyl-D-alanyl-D-alanine + UDP + H(+). The protein operates within cell wall biogenesis; peptidoglycan biosynthesis. In terms of biological role, cell wall formation. Catalyzes the transfer of a GlcNAc subunit on undecaprenyl-pyrophosphoryl-MurNAc-pentapeptide (lipid intermediate I) to form undecaprenyl-pyrophosphoryl-MurNAc-(pentapeptide)GlcNAc (lipid intermediate II). This Rhodococcus jostii (strain RHA1) protein is UDP-N-acetylglucosamine--N-acetylmuramyl-(pentapeptide) pyrophosphoryl-undecaprenol N-acetylglucosamine transferase.